Consider the following 215-residue polypeptide: High mobility group protein B1 (215 aa).

2–10 contributes to the heparin binding site; sequence GKGDPKKPR. Residues 2–97 form a sufficient for interaction with HAVCR2 region; sequence GKGDPKKPRG…KFKDPNAPKR (96 aa). An N6-acetyllysine mark is found at Lys3, Lys7, Lys8, and Lys12. The segment at 3–15 is LPS binding (delipidated); the sequence is KGDPKKPRGKMSS. Positions 9-79 form a DNA-binding region, HMG box 1; that stretch reads PRGKMSSYAF…RYEREMKTYI (71 aa). Cysteine sulfonic acid (-SO3H); alternate is present on Cys23. A disulfide bridge links Cys23 with Cys45. The short motif at 27 to 43 is the Nuclear localization signal (NLS) 1 element; sequence HKKKHPDASVNFSEFSK. Lys28, Lys29, and Lys30 each carry N6-acetyllysine. Lys28 is covalently cross-linked (Isoglutamyl lysine isopeptide (Lys-Gln) (interchain with Q-?)). Ser35 carries the post-translational modification Phosphoserine. The residue at position 43 (Lys43) is an N6-acetyllysine. Isoglutamyl lysine isopeptide (Lys-Gln) (interchain with Q-?) cross-links involve residues Lys43 and Lys44. Cys45 carries the post-translational modification Cysteine sulfonic acid (-SO3H); alternate. Residue Lys68 forms an Isoglutamyl lysine isopeptide (Lys-Gln) (interchain with Q-?) linkage. The disordered stretch occupies residues 76-95; the sequence is KTYIPPKGETKKKFKDPNAP. The segment at 80–96 is LPS binding (Lipid A); sequence PPKGETKKKFKDPNAPK. Residues 83 to 94 show a composition bias toward basic and acidic residues; the sequence is GETKKKFKDPNA. A cytokine-stimulating activity region spans residues 89 to 108; the sequence is FKDPNAPKRPPSAFFLFCSE. At Lys90 the chain carries N6-acetyllysine. Residues 95-163 constitute a DNA-binding region (HMG box 2); the sequence is PKRPPSAFFL…KYEKDIAAYR (69 aa). Position 100 is a phosphoserine (Ser100). Cys106 carries the cysteine sulfonic acid (-SO3H) modification. N6-acetyllysine is present on residues Lys127, Lys128, Lys141, Lys172, Lys173, Lys177, and Lys180. The tract at residues 150 to 183 is binding to AGER/RAGE; that stretch reads KLKEKYEKDIAAYRAKGKPDAAKKGVVKAEKSKK. The span at 161–179 shows a compositional bias: basic and acidic residues; that stretch reads AYRAKGKPDAAKKGVVKAE. Residues 161-215 form a disordered region; sequence AYRAKGKPDAAKKGVVKAEKSKKKKEEEEDEEDEEDEEEEEDEEDEEEEEDDDDE. The Nuclear localization signal (NLS) 2 signature appears at 178-184; sequence AEKSKKK. Lys180 participates in a covalent cross-link: Isoglutamyl lysine isopeptide (Lys-Gln) (interchain with Q-?). Ser181 is modified (ADP-ribosylserine). An N6-acetyllysine mark is found at Lys182, Lys183, Lys184, and Lys185. Residues Lys182, Lys183, and Lys184 each participate in an isoglutamyl lysine isopeptide (Lys-Gln) (interchain with Q-?) cross-link. A compositionally biased stretch (acidic residues) spans 187–215; that stretch reads EEEDEEDEEDEEEEEDEEDEEEEEDDDDE.

It belongs to the HMGB family. In terms of assembly, interacts (fully reduced HMGB1) with CXCL12; probably in a 1:2 ratio involving two molecules of CXCL12, each interacting with one HMG box of HMGB1; inhibited by glycyrrhizin. Associates with the TLR4:LY96 receptor complex. Component of the RAG complex composed of core components RAG1 and RAG2, and associated component HMGB1 or HMGB2. Interacts (in cytoplasm upon starvation) with BECN1; inhibits the interaction of BECN1 and BCL2 leading to promotion of autophagy. Interacts with KPNA1; involved in nuclear import. Interacts with AGER. Interacts with SREBF1, TLR2, TLR4, TLR9, PTPRZ1, APEX1, FEN1, POLB, TERT. Interacts with IL1B, MSH2, XPA, XPC, HNF1A, TP53. Interacts with CD24; the probable CD24:SIGLEC10 complex is proposed to inhibit HGMB1-mediated tissue damage immune response. Interacts with THBD; prevents HGMB1 interaction with ACER/RAGE and inhibits HGMB1 pro-inflammatory activity. Interacts with HAVCR2; impairs HMGB1 binding to B-DNA and likely HMGB1-mediated innate immune response. Interacts with XPO1; mediating nuclear export. Interacts with receptor RAGE/AGER. Phosphorylated at serine residues. Phosphorylation in both NLS regions is required for cytoplasmic translocation followed by secretion. In terms of processing, acetylated on multiple sites upon stimulation with LPS. Acetylation on lysine residues in the nuclear localization signals (NLS 1 and NLS 2) leads to cytoplasmic localization and subsequent secretion. Acetylation on Lys-3 results in preferential binding to DNA ends and impairs DNA bending activity. Post-translationally, reduction/oxidation of cysteine residues Cys-23, Cys-45 and Cys-106 and a possible intramolecular disulfide bond involving Cys-23 and Cys-45 give rise to different redox forms with specific functional activities in various cellular compartments: 1- fully reduced HMGB1 (HMGB1C23hC45hC106h), 2- disulfide HMGB1 (HMGB1C23-C45C106h) and 3- sulfonyl HMGB1 (HMGB1C23soC45soC106so). Poly-ADP-ribosylated by PARP1 when secreted following stimulation with LPS. In terms of processing, in vitro cleavage by CASP1 is liberating a HMG box 1-containing peptide which may mediate immunogenic activity; the peptide antagonizes apoptosis-induced immune tolerance. Can be proteolytically cleaved by a thrombin:thrombomodulin complex; reduces binding to heparin and pro-inflammatory activities. Post-translationally, forms covalent cross-links mediated by transglutaminase TGM2, between a glutamine and the epsilon-amino group of a lysine residue, forming homopolymers and heteropolymers.

The protein localises to the nucleus. It is found in the chromosome. It localises to the cytoplasm. The protein resides in the secreted. Its subcellular location is the cell membrane. The protein localises to the endosome. It is found in the endoplasmic reticulum-Golgi intermediate compartment. Functionally, multifunctional redox sensitive protein with various roles in different cellular compartments. In the nucleus is one of the major chromatin-associated non-histone proteins and acts as a DNA chaperone involved in replication, transcription, chromatin remodeling, V(D)J recombination, DNA repair and genome stability. Proposed to be an universal biosensor for nucleic acids. Promotes host inflammatory response to sterile and infectious signals and is involved in the coordination and integration of innate and adaptive immune responses. In the cytoplasm functions as a sensor and/or chaperone for immunogenic nucleic acids implicating the activation of TLR9-mediated immune responses, and mediates autophagy. Acts as a danger-associated molecular pattern (DAMP) molecule that amplifies immune responses during tissue injury. Released to the extracellular environment can bind DNA, nucleosomes, IL-1 beta, CXCL12, AGER isoform 2/sRAGE, lipopolysaccharide (LPS) and lipoteichoic acid (LTA), and activates cells through engagement of multiple surface receptors. In the extracellular compartment fully reduced HMGB1 (released by necrosis) acts as a chemokine, disulfide HMGB1 (actively secreted) as a cytokine, and sulfonyl HMGB1 (released from apoptotic cells) promotes immunological tolerance. Has proangiogenic activity. May be involved in platelet activation. Binds to phosphatidylserine and phosphatidylethanolamide. Bound to RAGE mediates signaling for neuronal outgrowth. May play a role in accumulation of expanded polyglutamine (polyQ) proteins. Its function is as follows. Nuclear functions are attributed to fully reduced HGMB1. Associates with chromatin and binds DNA with a preference to non-canonical DNA structures such as single-stranded DNA, DNA-containing cruciforms or bent structures, supercoiled DNA and ZDNA. Can bent DNA and enhance DNA flexibility by looping thus providing a mechanism to promote activities on various gene promoters by enhancing transcription factor binding and/or bringing distant regulatory sequences into close proximity. May be involved in nucleotide excision repair (NER), mismatch repair (MMR) and base excision repair (BER) pathways, and double strand break repair such as non-homologous end joining (NHEJ). Involved in V(D)J recombination by acting as a cofactor of the RAG complex: acts by stimulating cleavage and RAG protein binding at the 23 bp spacer of conserved recombination signal sequences (RSS). In vitro can displace histone H1 from highly bent DNA. Can restructure the canonical nucleosome leading to relaxation of structural constraints for transcription factor-binding. Enhances binding of sterol regulatory element-binding proteins (SREBPs) such as SREBF1 to their cognate DNA sequences and increases their transcriptional activities. Facilitates binding of TP53 to DNA. May be involved in mitochondrial quality control and autophagy in a transcription-dependent fashion implicating HSPB1. Can modulate the activity of the telomerase complex and may be involved in telomere maintenance. In the cytoplasm proposed to dissociate the BECN1:BCL2 complex via competitive interaction with BECN1 leading to autophagy activation. Involved in oxidative stress-mediated autophagy. Can protect BECN1 and ATG5 from calpain-mediated cleavage and thus proposed to control their proautophagic and proapoptotic functions and to regulate the extent and severity of inflammation-associated cellular injury. In myeloid cells has a protective role against endotoxemia and bacterial infection by promoting autophagy. Involved in endosomal translocation and activation of TLR9 in response to CpG-DNA in macrophages. In terms of biological role, in the extracellular compartment (following either active secretion or passive release)involved in regulation of the inflammatory response. Fully reduced HGMB1 (which subsequently gets oxidized after release) in association with CXCL12 mediates the recruitment of inflammatory cells during the initial phase of tissue injury; the CXCL12:HMGB1 complex triggers CXCR4 homodimerization. Induces the migration of monocyte-derived immature dendritic cells and seems to regulate adhesive and migratory functions of neutrophils implicating AGER/RAGE and ITGAM. Can bind to various types of DNA and RNA including microbial unmethylated CpG-DNA to enhance the innate immune response to nucleic acids. Proposed to act in promiscuous DNA/RNA sensing which cooperates with subsequent discriminative sensing by specific pattern recognition receptors. Promotes extracellular DNA-induced AIM2 inflammasome activation implicating AGER/RAGE. Disulfide HMGB1 binds to transmembrane receptors, such as AGER/RAGE, TLR2, TLR4 and probably TREM1, thus activating their signal transduction pathways. Mediates the release of cytokines/chemokines such as TNF, IL-1, IL-6, IL-8, CCL2, CCL3, CCL4 and CXCL10. Promotes secretion of interferon-gamma by macrophage-stimulated natural killer (NK) cells in concert with other cytokines like IL-2 or IL-12. TLR4 is proposed to be the primary receptor promoting macrophage activation and signaling through TLR4 seems to implicate LY96/MD-2. In bacterial LPS- or LTA-mediated inflammatory responses binds to the endotoxins and transfers them to CD14 for signaling to the respective TLR4:LY96 and TLR2 complexes. Contributes to tumor proliferation by association with ACER/RAGE. Can bind to IL1-beta and signals through the IL1R1:IL1RAP receptor complex. Binding to class A CpG activates cytokine production in plasmacytoid dendritic cells implicating TLR9, MYD88 and AGER/RAGE and can activate autoreactive B cells. Via HMGB1-containing chromatin immune complexes may also promote B cell responses to endogenous TLR9 ligands through a B-cell receptor (BCR)-dependent and ACER/RAGE-independent mechanism. Inhibits phagocytosis of apoptotic cells by macrophages; the function is dependent on poly-ADP-ribosylation and involves binding to phosphatidylserine on the cell surface of apoptotic cells. In adaptive immunity may be involved in enhancing immunity through activation of effector T-cells and suppression of regulatory T (TReg) cells. In contrast, without implicating effector or regulatory T-cells, required for tumor infiltration and activation of T-cells expressing the lymphotoxin LTA:LTB heterotrimer thus promoting tumor malignant progression. Also reported to limit proliferation of T-cells. Released HMGB1:nucleosome complexes formed during apoptosis can signal through TLR2 to induce cytokine production. Involved in induction of immunological tolerance by apoptotic cells; its pro-inflammatory activities when released by apoptotic cells are neutralized by reactive oxygen species (ROS)-dependent oxidation specifically on Cys-106. During macrophage activation by activated lymphocyte-derived self apoptotic DNA (ALD-DNA) promotes recruitment of ALD-DNA to endosomes. This chain is High mobility group protein B1 (HMGB1), found in Bos taurus (Bovine).